Here is a 170-residue protein sequence, read N- to C-terminus: Putative pre-16S rRNA nuclease (170 aa).

Belongs to the YqgF nuclease family.

It localises to the cytoplasm. Could be a nuclease involved in processing of the 5'-end of pre-16S rRNA. The chain is Putative pre-16S rRNA nuclease from Synechococcus sp. (strain JA-2-3B'a(2-13)) (Cyanobacteria bacterium Yellowstone B-Prime).